A 275-amino-acid polypeptide reads, in one-letter code: Large ribosomal subunit protein uL2c (275 aa).

The disordered stretch occupies residues M225–K252.

Belongs to the universal ribosomal protein uL2 family. As to quaternary structure, part of the 50S ribosomal subunit.

It localises to the plastid. The protein localises to the chloroplast. In Guillardia theta (Cryptophyte), this protein is Large ribosomal subunit protein uL2c (rpl2).